A 249-amino-acid polypeptide reads, in one-letter code: Very-long-chain (3R)-3-hydroxyacyl-CoA dehydratase 1 (249 aa).

Residues 1–22 (MASSEEDGTNGGASEAGEEKEA) form a disordered region. Residues 1–36 (MASSEEDGTNGGASEAGEEKEAPGRRRRLGLLATVW) are Cytoplasmic-facing. A helical transmembrane segment spans residues 37–56 (LTFYNIAMTAGWLVLAIAMV). At 57-75 (RFYMEKGTHKGLYKSIQKT) the chain is on the lumenal side. The helical transmembrane segment at 76-92 (LKFFQTFALLEIVHCLI) threads the bilayer. Over 93-102 (GIVPTSVIVA) the chain is Cytoplasmic. Residues 103-120 (GVQVSSRIFMVWLITHSI) traverse the membrane as a helical segment. Over 121-126 (KPIQNE) the chain is Lumenal. A helical transmembrane segment spans residues 127-141 (ESVVLFLVAWTVTEI). The Cytoplasmic segment spans residues 142–164 (TRYSFYTFSLLDHLPYFIKWARY). The helical transmembrane segment at 165–182 (NFFIILYPVGVVGELLTI) threads the bilayer. Active-site residues include tyrosine 171 and glutamate 178. Topologically, residues 183–212 (YAALPYVKKTGMFSIRLPNKYNVSFDYYYF) are lumenal. Asparagine 204 carries an N-linked (GlcNAc...) asparagine glycan. The chain crosses the membrane as a helical span at residues 213-230 (LLITMASYIPLFPQLYFH). Over 231 to 249 (MLRQRRKVLHGEVIVEKDD) the chain is Cytoplasmic.

Belongs to the very long-chain fatty acids dehydratase HACD family. May interact with enzymes of the ELO family (including ELOVL1); with those enzymes that mediate condensation, the first of the four steps of the reaction cycle responsible for fatty acids elongation, may be part of a larger fatty acids elongase complex. Interacts with TECR. In terms of tissue distribution, skeletal muscle.

It localises to the endoplasmic reticulum membrane. The enzyme catalyses a very-long-chain (3R)-3-hydroxyacyl-CoA = a very-long-chain (2E)-enoyl-CoA + H2O. It catalyses the reaction (3R)-hydroxyhexadecanoyl-CoA = (2E)-hexadecenoyl-CoA + H2O. The catalysed reaction is (3R)-hydroxyoctadecanoyl-CoA = (2E)-octadecenoyl-CoA + H2O. It carries out the reaction (3R)-hydroxyeicosanoyl-CoA = (2E)-eicosenoyl-CoA + H2O. The enzyme catalyses (3R)-hydroxydocosanoyl-CoA = (2E)-docosenoyl-CoA + H2O. It catalyses the reaction (3R)-hydroxytetracosanoyl-CoA = (2E)-tetracosenoyl-CoA + H2O. The catalysed reaction is (3R)-hydroxyhexacosanoyl-CoA = (2E)-hexacosenoyl-CoA + H2O. The protein operates within lipid metabolism; fatty acid biosynthesis. Functionally, catalyzes the third of the four reactions of the long-chain fatty acids elongation cycle. This endoplasmic reticulum-bound enzymatic process, allows the addition of two carbons to the chain of long- and very long-chain fatty acids/VLCFAs per cycle. This enzyme catalyzes the dehydration of the 3-hydroxyacyl-CoA intermediate into trans-2,3-enoyl-CoA, within each cycle of fatty acid elongation. Thereby, it participates in the production of VLCFAs of different chain lengths that are involved in multiple biological processes as precursors of membrane lipids and lipid mediators. This chain is Very-long-chain (3R)-3-hydroxyacyl-CoA dehydratase 1 (HACD1), found in Canis lupus familiaris (Dog).